The chain runs to 338 residues: Anthocyanidin reductase ((2S)-flavan-3-ol-forming) (338 aa).

Residues 18-21 (TGFV), lysine 48, 87-90 (VATP), and tyrosine 168 each bind NADP(+).

It belongs to the NAD(P)-dependent epimerase/dehydratase family. Dihydroflavonol-4-reductase subfamily. As to expression, expressed in seeds, grape skins, flowers and leaves.

It catalyses the reaction a (2S,3R)-flavan-3-ol + 2 NADP(+) = an anthocyanidin with a 3-hydroxy group + 2 NADPH + 2 H(+). The enzyme catalyses a (2S,3S)-flavan-3-ol + 2 NADP(+) = an anthocyanidin with a 3-hydroxy group + 2 NADPH + 2 H(+). It functions in the pathway secondary metabolite biosynthesis; flavonoid biosynthesis. Inhibited at NaCl concentrations higher than 200 mM. Functionally, produces the terminal flavan-3-ol monomers required for the formation of proanthocyanidins or condensed tannins in leaves and flowers, as well as in the skin and seeds of developing berries. Behaves as a reductase and as a C-3 epimerase. Catalyzes the double reduction of anthocyanidins, producing a mixture of (2S,3S)- and (2S,3R)-flavan-3-ols. The enzyme catalyzes sequential hydride transfers to C-2 and C-4, respectively and epimerization at C-3 is achieved by tautomerization that occurs between the two hydride transfers. Converts cyanidin, pelargonidin and delphinidin into catechin and epicatechin, afzelechin and epiafzelechin, and gallocatechin and epigallocatechin respectively. This Vitis vinifera (Grape) protein is Anthocyanidin reductase ((2S)-flavan-3-ol-forming).